Here is a 399-residue protein sequence, read N- to C-terminus: Unsaturated chondroitin disaccharide hydrolase (399 aa).

The active-site Nucleophile is the aspartate 116. Residues aspartate 116, aspartate 176, glycine 234, threonine 236, arginine 248, tryptophan 252, serine 366, and serine 369 each contribute to the substrate site. Residue aspartate 176 is the Proton donor of the active site.

It belongs to the glycosyl hydrolase 88 family. Monomer.

The catalysed reaction is beta-D-4-deoxy-Delta(4)-GlcpA-(1-&gt;3)-beta-D-GalpNAc6S + H2O = N-acetyl-beta-D-galactosamine 6-sulfate + 5-dehydro-4-deoxy-D-glucuronate. In terms of biological role, catalyzes the hydrolysis of unsaturated hyaluronate and chondroitin disaccharides. Also degrades unsaturated heparin disaccharides. Releases 4-deoxy-4,5-didehydro D-glucuronic acid or 4-deoxy-4,5-didehydro L-iduronic acid from chondroitin disaccharides, hyaluronan disaccharides and heparin disaccharides and cleaves both glycosidic (1-&gt;3) and (1-&gt;4) bonds. Prefers sulfated glycosaminoglycans compared to unsulfated glycosaminoglycans. Probably required for mammalian cells invasion through the degradation of extracellular sulfated glycosaminoglycans such as chondroitin and hyaluronan. In Streptococcus pyogenes serotype M1, this protein is Unsaturated chondroitin disaccharide hydrolase (ugl).